The sequence spans 200 residues: TATA-box-binding protein (200 aa).

2 repeat units span residues 25 to 101 (LQNI…ARII) and 115 to 192 (IQNI…YPVL).

It belongs to the TBP family. As to quaternary structure, belongs to the TFIID complex together with the TBP-associated factors (TAFs). Binds DNA as monomer.

The protein localises to the nucleus. Its function is as follows. General transcription factor that functions at the core of the DNA-binding multiprotein factor TFIID. Binding of TFIID to the TATA box is the initial transcriptional step of the pre-initiation complex (PIC), playing a role in the activation of eukaryotic genes transcribed by RNA polymerase II. The sequence is that of TATA-box-binding protein from Nicotiana tabacum (Common tobacco).